The sequence spans 224 residues: MAKSGKKYMQAISKIDKLKSYSIDDAISLLKEIKFVKFDETIDVSINLNLKKNHTVRDTVVLPNQFMKEKRILVFAKGDRAQEAKEAGAAYVGDDDLINKVKGGFSDFDIVVATPDMMKDVGKLGPILGKRGLMPNPKTQTITNDLKGTIAGLKKGRTEFRANKNGVLNFSVGKSSMDNKKIKENYDEFIKELLKRRPSDLKGTFVDSVYISSTMGPSVKIDFV.

The protein belongs to the universal ribosomal protein uL1 family. In terms of assembly, part of the 50S ribosomal subunit.

Functionally, binds directly to 23S rRNA. The L1 stalk is quite mobile in the ribosome, and is involved in E site tRNA release. In terms of biological role, protein L1 is also a translational repressor protein, it controls the translation of the L11 operon by binding to its mRNA. This chain is Large ribosomal subunit protein uL1, found in Borrelia hermsii (strain HS1 / DAH).